We begin with the raw amino-acid sequence, 200 residues long: Large ribosomal subunit protein uL4 (200 aa).

Residues 43–71 form a disordered region; that stretch reads RAQKTRAEVSGSGKKPWRQKGTGRARSGD.

It belongs to the universal ribosomal protein uL4 family. As to quaternary structure, part of the 50S ribosomal subunit.

Its function is as follows. One of the primary rRNA binding proteins, this protein initially binds near the 5'-end of the 23S rRNA. It is important during the early stages of 50S assembly. It makes multiple contacts with different domains of the 23S rRNA in the assembled 50S subunit and ribosome. Functionally, forms part of the polypeptide exit tunnel. This is Large ribosomal subunit protein uL4 from Histophilus somni (strain 2336) (Haemophilus somnus).